Here is a 430-residue protein sequence, read N- to C-terminus: ATP-dependent RNA helicase RhlB (430 aa).

Residues Gln-9–Ala-37 carry the Q motif motif. Residues Leu-40 to Val-219 enclose the Helicase ATP-binding domain. Ala-53–Thr-60 contributes to the ATP binding site. Positions Asp-165 to Asp-168 match the DEAD box motif. A Helicase C-terminal domain is found at Arg-245–Met-390. Residues Asp-392 to Asp-430 form a disordered region.

This sequence belongs to the DEAD box helicase family. RhlB subfamily. As to quaternary structure, component of the RNA degradosome, which is a multiprotein complex involved in RNA processing and mRNA degradation.

The protein resides in the cytoplasm. The catalysed reaction is ATP + H2O = ADP + phosphate + H(+). Functionally, DEAD-box RNA helicase involved in RNA degradation. Has RNA-dependent ATPase activity and unwinds double-stranded RNA. This Pectobacterium atrosepticum (strain SCRI 1043 / ATCC BAA-672) (Erwinia carotovora subsp. atroseptica) protein is ATP-dependent RNA helicase RhlB.